Consider the following 149-residue polypeptide: Large ribosomal subunit protein bL9 (149 aa).

Belongs to the bacterial ribosomal protein bL9 family.

Functionally, binds to the 23S rRNA. This Laribacter hongkongensis (strain HLHK9) protein is Large ribosomal subunit protein bL9.